The sequence spans 175 residues: Two-on-two hemoglobin-3 (175 aa).

Positions 85 and 98 each coordinate heme. Positions 153 to 175 are disordered; the sequence is QNEKPKHKPQCACKHAANKPAEE.

The protein belongs to the truncated hemoglobin family. Group II subfamily. As to quaternary structure, homodimer when ferric. Interacts with RGLG3 and RGLG4. The cofactor is heme. In terms of tissue distribution, expressed ubiquitously, with higher levels in root tissue than in shoot tissue.

Hemoglobin-like protein that exhibits an unusual concentration-independent binding of O(2) and CO. May promote shoot organogenesis from root explants in vitro. Inhibits RGLG3 and RGLG4 ubiquitination activity. In Arabidopsis thaliana (Mouse-ear cress), this protein is Two-on-two hemoglobin-3 (GLB3).